The chain runs to 126 residues: Holo-[acyl-carrier-protein] synthase (126 aa).

Mg(2+) contacts are provided by Asp8 and Glu57.

The protein belongs to the P-Pant transferase superfamily. AcpS family. The cofactor is Mg(2+).

The protein localises to the cytoplasm. The catalysed reaction is apo-[ACP] + CoA = holo-[ACP] + adenosine 3',5'-bisphosphate + H(+). Functionally, transfers the 4'-phosphopantetheine moiety from coenzyme A to a Ser of acyl-carrier-protein. The chain is Holo-[acyl-carrier-protein] synthase from Halorhodospira halophila (strain DSM 244 / SL1) (Ectothiorhodospira halophila (strain DSM 244 / SL1)).